A 358-amino-acid polypeptide reads, in one-letter code: Protein ocs (358 aa).

The protein belongs to the lysopine/nopaline/octopine/opine/vitopine dehydrogenases family. Monomer.

It carries out the reaction D-octopine + NAD(+) + H2O = L-arginine + pyruvate + NADH + H(+). The enzyme catalyses D-lysopine + NADP(+) + H2O = L-lysine + pyruvate + NADPH + H(+). Reductive condensation of pyruvate and arginine, lysine, histidine, or octopine to form octopine, lysopine, histopine, or octopinic acid, respectively. NADPH is the preferred cofactor, but NADH can also be used. This is Protein ocs (ocs) from Agrobacterium tumefaciens (strain Ach5).